Reading from the N-terminus, the 355-residue chain is Na(+)/H(+) exchange regulatory cofactor NHE-RF1 (355 aa).

Ser2 carries the post-translational modification N-acetylserine. Phosphoserine occurs at positions 2 and 46. The region spanning 14 to 94 is the PDZ 1 domain; that stretch reads LCCLEKGPNG…AVRLLVVDPE (81 aa). 2 stretches are compositionally biased toward basic and acidic residues: residues 110–119 and 127–146; these read LLRPQEKSEQ and DTHEAGDQNEAEKSHLRELR. The tract at residues 110-146 is disordered; that stretch reads LLRPQEKSEQAEPPAAADTHEAGDQNEAEKSHLRELR. In terms of domain architecture, PDZ 2 spans 149 to 229; the sequence is LCTMKKGPNG…EAKLLVVDKE (81 aa). The tract at residues 244-355 is disordered; it reads EHLDGPLPEP…SKKNELFSNL (112 aa). Over residues 259–268 the composition is skewed to basic and acidic residues; that stretch reads IQKESSREAL. Ser264, Ser275, Ser285, and Ser286 each carry phosphoserine. The segment covering 270-286 has biased composition (low complexity); sequence EPASESPRPALARSASS. Position 288 is a phosphothreonine (Thr288). A phosphoserine mark is found at Ser289, Ser294, and Ser297. A compositionally biased stretch (low complexity) spans 303–323; the sequence is STEPSSTSSSSSDPILDLNIS. Positions 345–355 are enriched in basic and acidic residues; the sequence is WSKKNELFSNL.

In terms of assembly, homodimer, and heterodimer with NHERF2. Binds the N-termini of EZR, RDX and MSN. Binds the C-termini of PDGFRA, PDGFRB, ADRB2 and NOS2. Binds ARHGAP17, EPI64, RACK1, OPRK1, GNAQ, CTNNB1, PLCB3 and CLCN3. Forms a complex with CFTR and SLC4A7. Forms a complex with SLC4A7 and ATP6V1B1. Binds PDZK1. Binds the C-terminus of PAG1. In resting T-cells, part of a PAG1-NHERF1-MSN complex which is disrupted upon TCR activation. Directly interacts with HTR4. Interacts with MCC. Interacts with TRPC4 (via the PDZ-binding domain). Interacts (via the PDZ 1 domain) with PODXL (via the C-terminal PDZ-binding motif DTHL); interaction is not detected in glomerular epithelium cells. Interacts (via the PDZ 1 domain) with PODXL (via the C-terminal PDZ-binding motif DTHL); the interaction take place early in the secretory pathway and is necessary for its apical membrane sorting. Interacts with SLC34A1. Interacts with CFTR, SLC26A3 and SLC26A6. Interacts (via PDZ domains) with ACE2 (via PDZ-binding motif); the interaction may enhance ACE2 membrane residence. In terms of tissue distribution, expressed in spermatogenic cells.

The protein resides in the cytoplasm. It localises to the apical cell membrane. Its subcellular location is the cell projection. The protein localises to the filopodium. It is found in the ruffle. The protein resides in the microvillus. It localises to the endomembrane system. Scaffold protein that connects plasma membrane proteins with members of the ezrin/moesin/radixin family and thereby helps to link them to the actin cytoskeleton and to regulate their surface expression. Necessary for recycling of internalized ADRB2. Was first known to play a role in the regulation of the activity and subcellular location of SLC9A3. Necessary for cAMP-mediated phosphorylation and inhibition of SLC9A3. May enhance Wnt signaling. May participate in HTR4 targeting to microvilli. Involved in the regulation of phosphate reabsorption in the renal proximal tubules. Involved in sperm capacitation. May participate in the regulation of the chloride and bicarbonate homeostasis in spermatozoa. This is Na(+)/H(+) exchange regulatory cofactor NHE-RF1 (Nherf1) from Mus musculus (Mouse).